Reading from the N-terminus, the 542-residue chain is Glucans biosynthesis protein D (542 aa).

A signal peptide (tat-type signal) is located at residues 1–31 (MHRRNLLKASMAIAAYTGLSATGLLASRAWA).

It belongs to the OpgD/OpgG family. Predicted to be exported by the Tat system. The position of the signal peptide cleavage has not been experimentally proven.

It localises to the periplasm. Its pathway is glycan metabolism; osmoregulated periplasmic glucan (OPG) biosynthesis. Its function is as follows. Probably involved in the control of the structural glucose backbone of osmoregulated periplasmic glucans (OPGs). The protein is Glucans biosynthesis protein D of Pseudomonas fluorescens (strain Pf0-1).